The primary structure comprises 454 residues: Aspartate aminotransferase P2, mitochondrial (454 aa).

Residues 1-49 (SSLLSIPSLSLQYNDKLKVGGNSLRFSKEQSNTFSNAKSSCRISMVAAV) constitute a mitochondrion transit peptide. L-aspartate contacts are provided by Gly86, Trp182, and Asn235. Lys299 is subject to N6-(pyridoxal phosphate)lysine. Arg428 contributes to the L-aspartate binding site.

Belongs to the class-I pyridoxal-phosphate-dependent aminotransferase family. Homodimer. Pyridoxal 5'-phosphate serves as cofactor.

Its subcellular location is the mitochondrion matrix. It carries out the reaction L-aspartate + 2-oxoglutarate = oxaloacetate + L-glutamate. Important for the metabolism of amino acids and Krebs-cycle related organic acids. In plants, it is involved in nitrogen metabolism and in aspects of carbon and energy metabolism. In Lupinus angustifolius (Narrow-leaved blue lupine), this protein is Aspartate aminotransferase P2, mitochondrial.